A 147-amino-acid chain; its full sequence is Putative protein adenylyltransferase MJ1305 (147 aa).

Positions 32-46 (GSYARGTAVEYSDVD) match the GSX(10)DXD motif motif. Residues aspartate 44 and aspartate 46 each contribute to the Mg(2+) site.

This sequence belongs to the MntA antitoxin family. Mg(2+) serves as cofactor.

The enzyme catalyses L-tyrosyl-[protein] + ATP = O-(5'-adenylyl)-L-tyrosyl-[protein] + diphosphate. It carries out the reaction O-(5'-adenylyl)-L-tyrosyl-[protein] + ATP = O-[5'-(adenylyl-(5'-&gt;3')-adenylyl)]-L-tyrosyl-[protein] + diphosphate. Putative antitoxin component of a putative type VII toxin-antitoxin (TA) system. Its cognate toxin might be MJ1304, which it might AMPylate. This chain is Putative protein adenylyltransferase MJ1305, found in Methanocaldococcus jannaschii (strain ATCC 43067 / DSM 2661 / JAL-1 / JCM 10045 / NBRC 100440) (Methanococcus jannaschii).